The following is a 206-amino-acid chain: Large ribosomal subunit protein uL4 (206 aa).

Residues threonine 48 to glycine 59 are compositionally biased toward basic and acidic residues. Positions threonine 48 to serine 77 are disordered. Residues glycine 60 to serine 77 are compositionally biased toward basic residues.

The protein belongs to the universal ribosomal protein uL4 family. In terms of assembly, part of the 50S ribosomal subunit.

Functionally, one of the primary rRNA binding proteins, this protein initially binds near the 5'-end of the 23S rRNA. It is important during the early stages of 50S assembly. It makes multiple contacts with different domains of the 23S rRNA in the assembled 50S subunit and ribosome. Its function is as follows. Forms part of the polypeptide exit tunnel. The polypeptide is Large ribosomal subunit protein uL4 (Pelotomaculum thermopropionicum (strain DSM 13744 / JCM 10971 / SI)).